The following is a 299-amino-acid chain: MKTLTLAHHGLGRRAHAFYVLTKPRVNALIVFCAVIGMFLAVPDGLPDPLRVFAATVGIACVAGAAAAMNCLIEQQLDARMARTRNRPLPRGELHSVEVLVFAGVLGGFGLSVLYQAVNALTMWLTLATFVGYAVIYTLLLKPRTPQNIVIGGASGAMPPVLGWAAVSGEVTAEALLLFLIIFAWTPPHFWSLALYRTADYARAGLPMLPVTHGAAYTRLSVLLYTCALFGVTLLPFAIRMSGWIYLVAAVTLGLRFVHYAWRLLRDYSDALARRTFRFSIVYLSLLFAALLADHYLRL.

Helical transmembrane passes span Val26–Leu46, Phe53–Ile73, Leu94–Leu114, Leu121–Leu141, Ile149–Gly169, Ala175–Leu195, Tyr217–Ile239, Gly243–Leu265, and Phe277–Leu297.

It belongs to the UbiA prenyltransferase family. Protoheme IX farnesyltransferase subfamily.

The protein resides in the cell inner membrane. It carries out the reaction heme b + (2E,6E)-farnesyl diphosphate + H2O = Fe(II)-heme o + diphosphate. It participates in porphyrin-containing compound metabolism; heme O biosynthesis; heme O from protoheme: step 1/1. In terms of biological role, converts heme B (protoheme IX) to heme O by substitution of the vinyl group on carbon 2 of heme B porphyrin ring with a hydroxyethyl farnesyl side group. In Azoarcus sp. (strain BH72), this protein is Protoheme IX farnesyltransferase.